The primary structure comprises 338 residues: MSKPIVLSGVQPSGELSIGNYLGALRQWQQMQDDYDCQYCVVDLHAITVRQDPKALHEATLDALAICLAVGVDPKKSTLFVQSHVPEHAQLGWLLNCYTQMGELSRMTQFKDKSARHSNDVNVGLFDYPVLMAADILLYGAHQVPVGSDQKQHLELARDIATRFNNIYSPEAPIFTVPEPYIPQVNARVMSLQDATKKMSKSDDNRKNVITLLEEPKSILKKINKAQTDAEMPPRIAHDWENKAGISNLMGLYSAATGKTFEEIEAQYQGVEMYGPFKKDVGEAIVTMLEPIQEEYKRIREDRAYMDAVMKAGAEKASERAAVTLKKAYEAVGFVTRP.

ATP contacts are provided by residues 11–13 and 19–20; these read QPS and GN. The short motif at 12–20 is the 'HIGH' region element; the sequence is PSGELSIGN. Residue D135 coordinates L-tryptophan. Residues 147 to 149, V189, and 198 to 202 contribute to the ATP site; these read GSD and KMSKS. A 'KMSKS' region motif is present at residues 198 to 202; that stretch reads KMSKS.

This sequence belongs to the class-I aminoacyl-tRNA synthetase family. Homodimer.

It localises to the cytoplasm. It catalyses the reaction tRNA(Trp) + L-tryptophan + ATP = L-tryptophyl-tRNA(Trp) + AMP + diphosphate + H(+). Catalyzes the attachment of tryptophan to tRNA(Trp). The chain is Tryptophan--tRNA ligase from Aliivibrio fischeri (strain ATCC 700601 / ES114) (Vibrio fischeri).